We begin with the raw amino-acid sequence, 231 residues long: Enolase-phosphatase E1 (231 aa).

2 residues coordinate Mg(2+): aspartate 11 and glutamate 13. Residues 125 to 126 and lysine 162 each bind substrate; that span reads SS. A Mg(2+)-binding site is contributed by aspartate 188.

It belongs to the HAD-like hydrolase superfamily. MasA/MtnC family. Monomer. Requires Mg(2+) as cofactor.

It localises to the cytoplasm. It is found in the nucleus. It carries out the reaction 5-methylsulfanyl-2,3-dioxopentyl phosphate + H2O = 1,2-dihydroxy-5-(methylsulfanyl)pent-1-en-3-one + phosphate. Its pathway is amino-acid biosynthesis; L-methionine biosynthesis via salvage pathway; L-methionine from S-methyl-5-thio-alpha-D-ribose 1-phosphate: step 3/6. It functions in the pathway amino-acid biosynthesis; L-methionine biosynthesis via salvage pathway; L-methionine from S-methyl-5-thio-alpha-D-ribose 1-phosphate: step 4/6. In terms of biological role, bifunctional enzyme that catalyzes the enolization of 2,3-diketo-5-methylthiopentyl-1-phosphate (DK-MTP-1-P) into the intermediate 2-hydroxy-3-keto-5-methylthiopentenyl-1-phosphate (HK-MTPenyl-1-P), which is then dephosphorylated to form the acireductone 1,2-dihydroxy-3-keto-5-methylthiopentene (DHK-MTPene). The protein is Enolase-phosphatase E1 of Pyricularia oryzae (strain 70-15 / ATCC MYA-4617 / FGSC 8958) (Rice blast fungus).